Reading from the N-terminus, the 139-residue chain is Metallothiol transferase FosB (139 aa).

The VOC domain maps to 4 to 119 (GINHITYSVS…DGHKLELHTG (116 aa)). Residues H7, H66, and E115 each contribute to the Mg(2+) site. E115 serves as the catalytic Proton donor/acceptor.

Belongs to the fosfomycin resistance protein family. FosB subfamily. As to quaternary structure, homodimer. Requires Mg(2+) as cofactor.

Its subcellular location is the cytoplasm. In terms of biological role, metallothiol transferase which confers resistance to fosfomycin by catalyzing the addition of a thiol cofactor to fosfomycin. L-cysteine is probably the physiological thiol donor. The sequence is that of Metallothiol transferase FosB from Staphylococcus epidermidis.